An 86-amino-acid polypeptide reads, in one-letter code: Large ribosomal subunit protein bL31B (86 aa).

Belongs to the bacterial ribosomal protein bL31 family. Type B subfamily. In terms of assembly, part of the 50S ribosomal subunit.

This Salmonella arizonae (strain ATCC BAA-731 / CDC346-86 / RSK2980) protein is Large ribosomal subunit protein bL31B.